A 138-amino-acid polypeptide reads, in one-letter code: ATP synthase epsilon chain, chloroplastic (138 aa).

The protein belongs to the ATPase epsilon chain family. F-type ATPases have 2 components, CF(1) - the catalytic core - and CF(0) - the membrane proton channel. CF(1) has five subunits: alpha(3), beta(3), gamma(1), delta(1), epsilon(1). CF(0) has three main subunits: a, b and c.

The protein resides in the plastid. The protein localises to the chloroplast thylakoid membrane. Produces ATP from ADP in the presence of a proton gradient across the membrane. The polypeptide is ATP synthase epsilon chain, chloroplastic (Huperzia lucidula (Shining clubmoss)).